The chain runs to 366 residues: MISSYHRPTRALIDLEAIANNVKSVQEHIPSDKKTFAVVKANAYGHGAVEVSKYIESIVDGFCVSNLDEAIELRQAGIVKMILVLGVVMPEQVILAKNENITLTVASLEWLRLCQTSAVDLSGLEVHIKVDSGMGRIGVRQLDEGNKLISELGESGASVKGIFTHFATADEADNCKFNQQLTFFKDFISGLDNCPDLVHASNSATSLWHSETIFNAVRLGVVMYGLNPSGTDLDLPYPINPALSLESELVHVKQLHDGSQVGYGATYQVTGDEFVGTVPIGYADGWTRDMQGFSVIVNGELCEIIGRVSMDQMTIRLPQKYTIGTKVTLIGQQGSCNITTTDVAQKRQTINYEVLCLLSDRIPRYY.

The Proton acceptor; specific for D-alanine role is filled by K40. An N6-(pyridoxal phosphate)lysine modification is found at K40. Residue R136 participates in substrate binding. Catalysis depends on Y263, which acts as the Proton acceptor; specific for L-alanine. A substrate-binding site is contributed by M310.

It belongs to the alanine racemase family. Pyridoxal 5'-phosphate serves as cofactor.

It carries out the reaction L-alanine = D-alanine. The protein operates within amino-acid biosynthesis; D-alanine biosynthesis; D-alanine from L-alanine: step 1/1. In terms of biological role, catalyzes the interconversion of L-alanine and D-alanine. May also act on other amino acids. The sequence is that of Alanine racemase (alr) from Streptococcus agalactiae serotype Ia (strain ATCC 27591 / A909 / CDC SS700).